We begin with the raw amino-acid sequence, 1161 residues long: Nardilysin (1161 aa).

The signal sequence occupies residues 1 to 18; it reads MLRRVAVAAVCVTGRKLR. 2 disordered regions span residues 49 to 103 and 130 to 218; these read MPGR…IIKS and VEGK…KKTT. Phosphoserine occurs at positions 85, 91, and 93. A compositionally biased stretch (acidic residues) spans 138–209; that stretch reads TDEEEEEEEE…EENELEELEE (72 aa). Zn(2+) is bound at residue H244. The Proton acceptor role is filled by E247. H248 and E325 together coordinate Zn(2+).

The protein belongs to the peptidase M16 family. In terms of assembly, interacts with BACE1 and NRG1. Requires Zn(2+) as cofactor. Highly expressed in brain of early postnatal mice but expressed at a lower level in the brains of adult mice. Expression is high in cortical neurons, and lower in neurons in the striatum. Very low expression detected in the corpus callosum. Also expressed in the gray matter in spinal cord and dorsal root ganglia.

It is found in the mitochondrion. The protein localises to the cell projection. Its subcellular location is the dendrite. The enzyme catalyses Hydrolysis of polypeptides, preferably at -Xaa-|-Arg-Lys-, and less commonly at -Arg-|-Arg-Xaa-, in which Xaa is not Arg or Lys.. Functionally, cleaves peptide substrates on the N-terminus of arginine residues in dibasic pairs. Is a critical activator of BACE1- and ADAM17-mediated pro-neuregulin ectodomain shedding, involved in the positive regulation of axonal maturation and myelination. Required for proper functioning of 2-oxoglutarate dehydrogenase (OGDH). This Mus musculus (Mouse) protein is Nardilysin.